The primary structure comprises 1286 residues: DNA-directed RNA polymerase subunit beta' (1286 aa).

Zn(2+)-binding residues include Cys58, Cys60, Cys73, and Cys76. Mg(2+)-binding residues include Asp533, Asp535, and Asp537. Positions 867, 944, 951, and 954 each coordinate Zn(2+).

It belongs to the RNA polymerase beta' chain family. As to quaternary structure, the RNAP catalytic core consists of 2 alpha, 1 beta, 1 beta' and 1 omega subunit. When a sigma factor is associated with the core the holoenzyme is formed, which can initiate transcription. Requires Mg(2+) as cofactor. It depends on Zn(2+) as a cofactor.

It catalyses the reaction RNA(n) + a ribonucleoside 5'-triphosphate = RNA(n+1) + diphosphate. Functionally, DNA-dependent RNA polymerase catalyzes the transcription of DNA into RNA using the four ribonucleoside triphosphates as substrates. This Tropheryma whipplei (strain TW08/27) (Whipple's bacillus) protein is DNA-directed RNA polymerase subunit beta'.